We begin with the raw amino-acid sequence, 434 residues long: Nicotinate phosphoribosyltransferase (434 aa).

The residue at position 242 (His-242) is a Phosphohistidine; by autocatalysis.

It belongs to the NAPRTase family. In terms of processing, transiently phosphorylated on a His residue during the reaction cycle. Phosphorylation strongly increases the affinity for substrates and increases the rate of nicotinate D-ribonucleotide production. Dephosphorylation regenerates the low-affinity form of the enzyme, leading to product release.

It catalyses the reaction nicotinate + 5-phospho-alpha-D-ribose 1-diphosphate + ATP + H2O = nicotinate beta-D-ribonucleotide + ADP + phosphate + diphosphate. The protein operates within cofactor biosynthesis; NAD(+) biosynthesis; nicotinate D-ribonucleotide from nicotinate: step 1/1. Its function is as follows. Catalyzes the synthesis of beta-nicotinate D-ribonucleotide from nicotinate and 5-phospho-D-ribose 1-phosphate at the expense of ATP. In Chelativorans sp. (strain BNC1), this protein is Nicotinate phosphoribosyltransferase.